Here is a 659-residue protein sequence, read N- to C-terminus: Threonine--tRNA ligase (659 aa).

A TGS domain is found at 3–64 (EKIRITLIDN…LEDGRLEIIT (62 aa)). The tract at residues 249–555 (DHRRLGQEMD…LIEHHAGRFP (307 aa)) is catalytic. Cysteine 354, histidine 405, and histidine 532 together coordinate Zn(2+).

The protein belongs to the class-II aminoacyl-tRNA synthetase family. As to quaternary structure, homodimer. Requires Zn(2+) as cofactor.

The protein localises to the cytoplasm. The enzyme catalyses tRNA(Thr) + L-threonine + ATP = L-threonyl-tRNA(Thr) + AMP + diphosphate + H(+). In terms of biological role, catalyzes the attachment of threonine to tRNA(Thr) in a two-step reaction: L-threonine is first activated by ATP to form Thr-AMP and then transferred to the acceptor end of tRNA(Thr). Also edits incorrectly charged L-seryl-tRNA(Thr). In Zymomonas mobilis subsp. mobilis (strain ATCC 31821 / ZM4 / CP4), this protein is Threonine--tRNA ligase.